A 231-amino-acid chain; its full sequence is Floral homeotic protein PMADS 1 (231 aa).

An MADS-box domain is found at 3 to 58 (RGKIQIKRIENQTNRQVTYSKRRNGLFKKANELTVLCDAKVSIIMISSTGKLHEFI). A K-box domain is found at 84–174 (YEKMQEQLRK…LLEFDARQED (91 aa)).

As to expression, predominantly expressed in petals and stamens, less in carpels and sepals.

The protein localises to the nucleus. In terms of biological role, transcription factor involved in the genetic control of flower development. Necessary for the normal development of petals. Absence of the PMADS1 protein causes transformation of petals into sepals. The chain is Floral homeotic protein PMADS 1 (PMADS1) from Petunia hybrida (Petunia).